A 247-amino-acid polypeptide reads, in one-letter code: Probable transcriptional regulatory protein HRM2_04000 (247 aa).

Belongs to the TACO1 family.

It localises to the cytoplasm. The protein is Probable transcriptional regulatory protein HRM2_04000 of Desulforapulum autotrophicum (strain ATCC 43914 / DSM 3382 / VKM B-1955 / HRM2) (Desulfobacterium autotrophicum).